We begin with the raw amino-acid sequence, 405 residues long: Phosphopentomutase (405 aa).

Positions 10, 297, 302, 338, 339, and 350 each coordinate Mn(2+).

The protein belongs to the phosphopentomutase family. The cofactor is Mn(2+).

It is found in the cytoplasm. The catalysed reaction is 2-deoxy-alpha-D-ribose 1-phosphate = 2-deoxy-D-ribose 5-phosphate. It carries out the reaction alpha-D-ribose 1-phosphate = D-ribose 5-phosphate. It participates in carbohydrate degradation; 2-deoxy-D-ribose 1-phosphate degradation; D-glyceraldehyde 3-phosphate and acetaldehyde from 2-deoxy-alpha-D-ribose 1-phosphate: step 1/2. Isomerase that catalyzes the conversion of deoxy-ribose 1-phosphate (dRib-1-P) and ribose 1-phosphate (Rib-1-P) to deoxy-ribose 5-phosphate (dRib-5-P) and ribose 5-phosphate (Rib-5-P), respectively. This chain is Phosphopentomutase, found in Pseudoalteromonas translucida (strain TAC 125).